The sequence spans 359 residues: Fructose-bisphosphate aldolase (359 aa).

At threonine 11 the chain carries Phosphothreonine. A Glycyl lysine isopeptide (Lys-Gly) (interchain with G-Cter in ubiquitin) cross-link involves residue lysine 27. Residues serine 56 and serine 63 each carry the phosphoserine modification. Serine 63 lines the D-glyceraldehyde 3-phosphate pocket. Lysine 73 participates in a covalent cross-link: Glycyl lysine isopeptide (Lys-Gly) (interchain with G-Cter in ubiquitin). A phosphoserine mark is found at serine 76 and serine 83. Residue lysine 85 forms a Glycyl lysine isopeptide (Lys-Gly) (interchain with G-Cter in ubiquitin) linkage. Residue serine 96 is modified to Phosphoserine. Catalysis depends on aspartate 110, which acts as the Proton donor. Zn(2+)-binding residues include histidine 111 and aspartate 145. Position 147 is a phosphoserine (serine 147). Phosphothreonine is present on threonine 150. Zn(2+) is bound at residue glutamate 175. Phosphothreonine is present on threonine 179. Histidine 227 contributes to the Zn(2+) binding site. Glycine 228 lines the dihydroxyacetone phosphate pocket. Histidine 265 is a Zn(2+) binding site. Dihydroxyacetone phosphate-binding positions include 266-268 (GGS) and 287-290 (NLDT). Serine 268 carries the phosphoserine modification. Residue threonine 290 is modified to Phosphothreonine. Residue lysine 308 forms a Glycyl lysine isopeptide (Lys-Gly) (interchain with G-Cter in ubiquitin) linkage. A Phosphotyrosine modification is found at tyrosine 310. Phosphoserine is present on serine 313.

The protein belongs to the class II fructose-bisphosphate aldolase family. In terms of assembly, homodimer. It depends on Zn(2+) as a cofactor.

It catalyses the reaction beta-D-fructose 1,6-bisphosphate = D-glyceraldehyde 3-phosphate + dihydroxyacetone phosphate. Its pathway is carbohydrate degradation; glycolysis; D-glyceraldehyde 3-phosphate and glycerone phosphate from D-glucose: step 4/4. In terms of biological role, catalyzes the aldol condensation of dihydroxyacetone phosphate (DHAP or glycerone-phosphate) with glyceraldehyde 3-phosphate (G3P) to form fructose 1,6-bisphosphate (FBP) in gluconeogenesis and the reverse reaction in glycolysis. In Saccharomyces cerevisiae (strain ATCC 204508 / S288c) (Baker's yeast), this protein is Fructose-bisphosphate aldolase (FBA1).